Consider the following 88-residue polypeptide: Homeobox protein knotted-1-like 11 (88 aa).

The 21-residue stretch at 4–24 (ELKEMLLKKYSGCLSRLRSEF) folds into the ELK domain. Positions 25 to 88 (LKKRKKGKLP…NQRKRHWKPS (64 aa)) form a DNA-binding region, homeobox; TALE-type.

This sequence belongs to the TALE/KNOX homeobox family.

The protein resides in the nucleus. Its function is as follows. Probably binds to the DNA sequence 5'-TGAC-3'. This is Homeobox protein knotted-1-like 11 (KNOX11) from Zea mays (Maize).